Here is a 132-residue protein sequence, read N- to C-terminus: Interleukin-13 (132 aa).

Residues 1–18 (MALLLTAVIVLICFGGLT) form the signal peptide. N-linked (GlcNAc...) asparagine glycosylation is found at N38, N49, N57, and N75. 2 cysteine pairs are disulfide-bonded: C48–C76 and C64–C90.

It belongs to the IL-4/IL-13 family. Interacts with IL13RA2.

It localises to the secreted. Cytokine that plays important roles in allergic inflammation and immune response to parasite infection. Synergizes with IL2 in regulating interferon-gamma synthesis. Stimulates B-cell proliferation, and activation of eosinophils, basophils, and mast cells. Plays an important role in controlling IL33 activity by modulating the production of transmembrane and soluble forms of interleukin-1 receptor-like 1/IL1RL1. Displays the capacity to antagonize Th1-driven proinflammatory immune response and downregulates synthesis of many proinflammatory cytokines including IL1, IL6, IL10, IL12 and TNF-alpha through a mechanism that partially involves suppression of NF-kappa-B. Also functions on nonhematopoietic cells, including endothelial cells where it induces vascular cell adhesion protein 1/VCAM1, which is important in the recruitment of eosinophils. Exerts its biological effects through its receptors which comprises the IL4R chain and the IL13RA1 chain, to activate JAK1 and TYK2, leading to the activation of STAT6. Aside from IL13RA1, another receptor IL13RA2 acts as a high affinity decoy for IL13 and mediates internalization and depletion of extracellular IL13. The protein is Interleukin-13 (IL13) of Bos taurus (Bovine).